A 275-amino-acid polypeptide reads, in one-letter code: Anamorsin homolog (275 aa).

Residues 1 to 147 (MTSASIHIGS…QSASSAAATG (147 aa)) form an N-terminal SAM-like domain region. Residues 148 to 183 (RINLGGAKTKVKLSLDDDDDDQLIDEDDLLNGGGGM) are linker. [2Fe-2S] cluster contacts are provided by Cys203, Cys209, Cys212, and Cys214. Residues 203-214 (CGGRKACDNCTC) are fe-S binding site A. The [4Fe-4S] cluster site is built by Cys238, Cys241, Cys249, and Cys252. Short sequence motifs (cx2C motif) lie at residues 238–241 (CGNC) and 249–252 (CAGC). The segment at 238 to 252 (CGNCAKGDAFRCAGC) is fe-S binding site B.

It belongs to the anamorsin family. As to quaternary structure, monomer. [2Fe-2S] cluster is required as a cofactor. Requires [4Fe-4S] cluster as cofactor.

Its subcellular location is the cytoplasm. The protein localises to the mitochondrion intermembrane space. Component of the cytosolic iron-sulfur (Fe-S) protein assembly (CIA) machinery. Required for the maturation of extramitochondrial Fe-S proteins. Part of an electron transfer chain functioning in an early step of cytosolic Fe-S biogenesis, facilitating the de novo assembly of a [4Fe-4S] cluster on the cytosolic Fe-S scaffold complex. Electrons are transferred from NADPH via a FAD- and FMN-containing diflavin oxidoreductase. Together with the diflavin oxidoreductase, also required for the assembly of the diferric tyrosyl radical cofactor of ribonucleotide reductase (RNR), probably by providing electrons for reduction during radical cofactor maturation in the catalytic small subunit. This Thalassiosira pseudonana (Marine diatom) protein is Anamorsin homolog.